The sequence spans 181 residues: Peptidyl-tRNA hydrolase (181 aa).

Tyrosine 14 serves as a coordination point for tRNA. Histidine 19 (proton acceptor) is an active-site residue. Residues phenylalanine 61, asparagine 63, and asparagine 107 each coordinate tRNA.

It belongs to the PTH family. In terms of assembly, monomer.

Its subcellular location is the cytoplasm. The catalysed reaction is an N-acyl-L-alpha-aminoacyl-tRNA + H2O = an N-acyl-L-amino acid + a tRNA + H(+). Its function is as follows. Hydrolyzes ribosome-free peptidyl-tRNAs (with 1 or more amino acids incorporated), which drop off the ribosome during protein synthesis, or as a result of ribosome stalling. Catalyzes the release of premature peptidyl moieties from peptidyl-tRNA molecules trapped in stalled 50S ribosomal subunits, and thus maintains levels of free tRNAs and 50S ribosomes. The polypeptide is Peptidyl-tRNA hydrolase (Campylobacter fetus subsp. fetus (strain 82-40)).